We begin with the raw amino-acid sequence, 334 residues long: Methionine adenosyltransferase 2 subunit beta (334 aa).

NADP(+) is bound by residues 37–40, 60–62, 71–72, C93, R97, Y159, and L185; these read TGLL, FRR, and NL. T309 is modified (phosphothreonine). The segment at 319–334 is required for interaction with MAT2A; the sequence is LWPFLIDKRWRQTVFH.

The protein belongs to the dTDP-4-dehydrorhamnose reductase family. MAT2B subfamily. As to quaternary structure, heterotrimer; composed of a catalytic MAT2A homodimer that binds one regulatory MAT2B chain. Heterohexamer; composed of a central, catalytic MAT2A homotetramer flanked on either side by a regulatory MAT2B chain. NADP binding increases the affinity for MAT2A.

It participates in amino-acid biosynthesis; S-adenosyl-L-methionine biosynthesis; S-adenosyl-L-methionine from L-methionine: step 1/1. In terms of biological role, regulatory subunit of S-adenosylmethionine synthetase 2, an enzyme that catalyzes the formation of S-adenosylmethionine from methionine and ATP. Regulates MAT2A catalytic activity by changing its kinetic properties, increasing its affinity for L-methionine. Can bind NADP (in vitro). The sequence is that of Methionine adenosyltransferase 2 subunit beta (MAT2B) from Pongo abelii (Sumatran orangutan).